Here is a 1877-residue protein sequence, read N- to C-terminus: MGKRAGGAAAAAAAASTSSAAGLEPAAGRGGGPRSAAAGLLGALHLVMTLVVAAARAEKEAFIQSESIIEVLRFDDGGLLQTETTLGLGSYQQKSISLYRGNCRPIRFEPPMLDFHEQPVGMPKMEKVYLHNPSSEETITLVSISATTSHFHASFFQNRKILPGGNTSFDVVFLARVVGNVENTLFINTSNHGVFTYQVFGVGVPNPYRLRPFLGARVPVNSSFSPIINIHNPHSEPLQVVEMYSSGGDLHLELPTGQQGGTRKLWEIPPYETKGVMRASFSSREADNHTAFIRIKTNASDSTEFIILPVEVEVTTAPGIYSSTEMLDFGTLRTQDLPKVLNLHLLNSGTKDVPITSVRPTPQNDAITVHFKPVTLKASESKYTKVASISFDASRAKKPSQFSGKITVKAKEKSYSKLEIPYQAEVLDGYLGFDHAATLFHIQDSPADPVERPIYLTNTFSFAILIHDVLLPEEARIMFQVHNFSQPVLILPNESGYIFTLFFMPSTSSMHIDNNILLVTNASKFHLPVRVYTGFLDYFVLPPKIEERFIDFGVLSATEASSILFAIINSNPIELAIKSWHIIGDGLSIELVATERGNRSTVIASLPELERSSLPDQSPVTLASGHFAVFRVKLTAKKLEGVHDGAIQITTDYEILTIPVKAVIAVGSLTCFPKHMVLPPSFPGKIVHQSLNIMNSFSQKVKIQQIRSLSEDVRFYYKRLRGNREDLEPGKKSKIANIYFDPGLQCGDHCYIGLPFLSKSEPKVQPGVAMQEDLWDADWDAHQSLFKAWMGIKENAGHRLNAMFEVNTDLQKNIVSKVSAELSWPSVLSSPRLLKFPLTNTNCSSEEEISLENPADVPVYVQFIPLALYSNPSVFADKLVSRFNLSKVAKLDLRTLEFQVYRNSAHPLQSPTGFTEGLSRHFILNLILKPGEKKSVKVKFTPLHNRTVSSLIIVRNNLTVMDAVMVQGQGTTENLRVAGKLPGPGSSLRFKITEALLKDCIDRLKLREPNFTLKRTFKVENTGQLEIRVETIEISGYACEGYGFKVVNCQEFALSANASRDIVILFTPDFTASRVIRELKFVTSSGSEFVFVLNASLPYHMLAACAEALPRPNWELALYIIISGVMSALFLLVIGTAYLEAQGIWEPFRRRLSFEASNPPFDVGRPFDLRRIVGISSEGNLNTLGCEHSHGRGFYSNASSRPGTGSHRQCGTSVHPHSSHGSKNSADVDNVRTRNSSSMSSRTSPQAAASQSTSKTSPLVSETAAATQGHTASRKSRGAKQGQHSSQHHSHSHSPLEQHSQPPPPVPQHQEPPPERLSPAPLTHPSHPERASTTRHSSEDSDITSLIEAMDKDFDHHDSSPLDVFTEQPPSPMSKSKGKGKSLQQRKAKPPKKQEEKEKRGKGKPQEDELKDALADDDSSSTTTETSNPDTEPLLREDTEKHKGRPAVPEKQESELSQGKPKSKKLLNAKKEIPTDVKGSSFELPYTPSLENKQRRNLPTKIPLPTTLASGSKSRNPPKTKGTNKLVENRPVALSKFLPSSQELGNTSSSEGEKDSPPPEWDAVPVHKPSSSTDSLYKLSLQTLNADIFLKQRQTSPTPASPSLPTAPCPFTSRGSYSSVVNSSGSDTKAKQTSSSKSKLTKAASLPGKNGNPTFAAVAAGYDKSPGGNGFAKISSNKSDFSSSLGISHIPVDSDGSDSSGLWSPVSNPNSPDFTPLNSFSAFGNSFNLTGAVFSKLSRSCSQSSQRSWNEFNSGPSYLWDSPATDPSPSWPASSSSPTHTATSILGNSSGLWSTTPFSSSIWSSNINSNLPFSTPTNALSSISLMGTENSAAAHTPSASGPADDLGQTYNPWRIWSPTVGRRSSDPWSNSHFPHEN.

An N-terminal signal peptide occupies residues 1 to 20 (MGKRAGGAAAAAAAASTSSA). Residues 21–1115 (AGLEPAAGRG…AEALPRPNWE (1095 aa)) are Lumenal-facing. A papD-L domain region spans residues 107–281 (RFEPPMLDFH…ETKGVMRASF (175 aa)). Residues 1116–1136 (LALYIIISGVMSALFLLVIGT) form a helical membrane-spanning segment. Residues 1137–1877 (AYLEAQGIWE…WSNSHFPHEN (741 aa)) lie on the Cytoplasmic side of the membrane. Polar residues predominate over residues 1197–1227 (NASSRPGTGSHRQCGTSVHPHSSHGSKNSAD). Disordered stretches follow at residues 1197 to 1573 (NASS…SSST), 1590 to 1655 (LKQR…NPTF), 1679 to 1707 (SDFS…SPVS), and 1830 to 1852 (NSAA…TYNP). The span at 1233–1258 (TRNSSSMSSRTSPQAAASQSTSKTSP) shows a compositional bias: low complexity. Positions 1301-1311 (QPPPPVPQHQE) are enriched in pro residues. Ser1318 and Ser1338 each carry phosphoserine. 2 stretches are compositionally biased toward basic and acidic residues: residues 1326–1339 (SHPE…HSSE) and 1349–1360 (AMDKDFDHHDSS). A Phosphoserine modification is found at Ser1371. Over residues 1376-1391 (SKGKGKSLQQRKAKPP) the composition is skewed to basic residues. Over residues 1392 to 1414 (KKQEEKEKRGKGKPQEDELKDAL) the composition is skewed to basic and acidic residues. Positions 1420-1432 (SSTTTETSNPDTE) are enriched in low complexity. Polar residues-rich tracts occupy residues 1507 to 1523 (TLAS…TKGT) and 1538 to 1550 (LPSS…TSSS). The segment covering 1599 to 1608 (PASPSLPTAP) has biased composition (pro residues). Residues 1609–1646 (CPFTSRGSYSSVVNSSGSDTKAKQTSSSKSKLTKAASL) are compositionally biased toward low complexity. Residues 1830–1839 (NSAAAHTPSA) are compositionally biased toward polar residues. 2 positions are modified to phosphoserine: Ser1857 and Ser1865.

Belongs to the TMEM131 family. As to quaternary structure, interacts (via PapD-L domain) with COL1A2 (via C-terminus); the interaction is direct, may occur with other collagen proteins, and is involved in assembly and TRAPPIII ER-to-Golgi transport complex-dependent secretion of collagen. Interacts (via C-terminus) with TRAPPC8 (via C-terminus); the interaction is direct.

The protein resides in the membrane. Its function is as follows. Collagen binding transmembrane protein involved in collagen secretion by recruiting the ER-to-Golgi transport complex TRAPPIII. May play a role in the immune response to viral infection. This Mus musculus (Mouse) protein is Transmembrane protein 131.